A 318-amino-acid chain; its full sequence is Glycine--tRNA ligase alpha subunit (318 aa).

The protein belongs to the class-II aminoacyl-tRNA synthetase family. In terms of assembly, tetramer of two alpha and two beta subunits.

It localises to the cytoplasm. It carries out the reaction tRNA(Gly) + glycine + ATP = glycyl-tRNA(Gly) + AMP + diphosphate. The chain is Glycine--tRNA ligase alpha subunit from Saccharophagus degradans (strain 2-40 / ATCC 43961 / DSM 17024).